The chain runs to 198 residues: Glycerol-3-phosphate acyltransferase (198 aa).

The next 6 membrane-spanning stretches (helical) occupy residues 1-21, 50-70, 77-97, 111-131, 136-156, and 157-177; these read MHIL…GFLF, WPAF…VKIA, NLFE…PIWL, MFIA…LIIL, IVSL…FLDI, and GSTN…VIWK.

Belongs to the PlsY family. Probably interacts with PlsX.

Its subcellular location is the cell inner membrane. The catalysed reaction is an acyl phosphate + sn-glycerol 3-phosphate = a 1-acyl-sn-glycero-3-phosphate + phosphate. It participates in lipid metabolism; phospholipid metabolism. In terms of biological role, catalyzes the transfer of an acyl group from acyl-phosphate (acyl-PO(4)) to glycerol-3-phosphate (G3P) to form lysophosphatidic acid (LPA). This enzyme utilizes acyl-phosphate as fatty acyl donor, but not acyl-CoA or acyl-ACP. In Prochlorococcus marinus subsp. pastoris (strain CCMP1986 / NIES-2087 / MED4), this protein is Glycerol-3-phosphate acyltransferase.